A 21-amino-acid polypeptide reads, in one-letter code: Peptide PGLa-R6 (21 aa).

Leucine amide is present on L21.

Expressed by the skin glands.

It is found in the secreted. Functionally, antimicrobial peptide. The chain is Peptide PGLa-R6 from Xenopus ruwenzoriensis (Uganda clawed frog).